Consider the following 395-residue polypeptide: MKIIRKDFVRNGPGSVKMMAEDSDDLWYTYNLIGPEDSVMAITFRKVGGEGRDSTPSLSRIESKYLGKKRSFTRTERVKLKLEVQVEEVDYDKDGDVMRIRGKNIMENEHVRIGAFHTLEIELKRPFLLRKENWDSLALDTLKQASDLAASADLAVVLMQEGLAQIFLAGKSVKSCGARIKTSIPWKHGAGTAGYESVLKKFFENVVQAFLKHVDFSVVRCAVIASPGFTKDQFHRHLLLEAERRQLRPILENKSRFILVHTNSGYKHSLSEVLHDPNVMNMIKDTKAAKEVKALNDFFTMFSNDPNRACYGPKHVEVAHERMAIQTLLIIDGLFRNSDVKTRKKYVDFVESVKDSGGEVFIFSSMHASGEQLAQHTGIAAILRFPLPDLEDIEM.

Belongs to the eukaryotic release factor 1 family. Pelota subfamily. It depends on a divalent metal cation as a cofactor.

The protein resides in the cytoplasm. The protein localises to the nucleus. In terms of biological role, component of the Pelota-HBS1L complex, a complex that recognizes stalled ribosomes and triggers the No-Go Decay (NGD) pathway. In the Pelota-HBS1L complex, pelo recognizes ribosomes stalled at the 3' end of an mRNA and engages stalled ribosomes by destabilizing mRNA in the mRNA channel. Following ribosome-binding, the Pelota-HBS1L complex promotes the disassembly of stalled ribosomes, followed by degradation of damaged mRNAs as part of the NGD pathway. The chain is Protein PELOTA 2 (PEL2) from Arabidopsis thaliana (Mouse-ear cress).